The following is a 944-amino-acid chain: 2-oxoglutarate dehydrogenase E1 component (944 aa).

Positions 918 to 944 (SSTAEGDPTVHKKEQERIVSDSLTRKN) are disordered. The segment covering 925 to 936 (PTVHKKEQERIV) has biased composition (basic and acidic residues).

Belongs to the alpha-ketoglutarate dehydrogenase family. Homodimer. Part of the 2-oxoglutarate dehydrogenase (OGDH) complex composed of E1 (2-oxoglutarate dehydrogenase), E2 (dihydrolipoamide succinyltransferase) and E3 (dihydrolipoamide dehydrogenase); the complex contains multiple copies of the three enzymatic components (E1, E2 and E3). Requires thiamine diphosphate as cofactor.

It catalyses the reaction N(6)-[(R)-lipoyl]-L-lysyl-[protein] + 2-oxoglutarate + H(+) = N(6)-[(R)-S(8)-succinyldihydrolipoyl]-L-lysyl-[protein] + CO2. Functionally, E1 component of the 2-oxoglutarate dehydrogenase (OGDH) complex which catalyzes the decarboxylation of 2-oxoglutarate, the first step in the conversion of 2-oxoglutarate to succinyl-CoA and CO(2). The polypeptide is 2-oxoglutarate dehydrogenase E1 component (Bacillus pumilus (strain SAFR-032)).